Here is a 563-residue protein sequence, read N- to C-terminus: Arginine--tRNA ligase (563 aa).

Residues P121–H131 carry the 'HIGH' region motif.

Belongs to the class-I aminoacyl-tRNA synthetase family. As to quaternary structure, monomer.

The protein resides in the cytoplasm. The enzyme catalyses tRNA(Arg) + L-arginine + ATP = L-arginyl-tRNA(Arg) + AMP + diphosphate. The protein is Arginine--tRNA ligase of Streptococcus pneumoniae (strain CGSP14).